We begin with the raw amino-acid sequence, 251 residues long: Protein unc-119 homolog B (251 aa).

The tract at residues M1 to K28 is disordered. S2 carries the N-acetylserine modification. K24 bears the N6-acetyllysine mark. Position 142 (Y142) interacts with tetradecanoate.

This sequence belongs to the PDE6D/unc-119 family. As to quaternary structure, found in a complex with ARL3, RP2 and UNC119B; RP2 induces hydrolysis of GTP ARL3 in the complex, leading to the release of UNC119B. Interacts with NPHP3 (when myristoylated). Interacts with CYS1 (when myristoylated). Interacts with MACIR; interaction only takes place when UNC119B is not liganded with myristoylated proteins.

Its subcellular location is the cell projection. It localises to the cilium. In terms of biological role, myristoyl-binding protein that acts as a cargo adapter: specifically binds the myristoyl moiety of a subset of N-terminally myristoylated proteins and is required for their localization. Binds myristoylated NPHP3 and plays a key role in localization of NPHP3 to the primary cilium membrane. Does not bind all myristoylated proteins. Probably plays a role in trafficking proteins in photoreceptor cells. This Homo sapiens (Human) protein is Protein unc-119 homolog B (UNC119B).